The following is a 291-amino-acid chain: m-AAA protease-interacting protein 1, mitochondrial (291 aa).

The N-terminal 96 residues, 1-96 (MALAARLLPQ…SFPACPQRSY (96 aa)), are a transit peptide targeting the mitochondrion.

As to quaternary structure, interacts with AFG3L2. Interacts with SPG7. Interacts with SMDT1/EMRE (via the N-terminal transit peptide); interaction is direct and takes place before maturation of SMDT1/EMRE.

The protein localises to the mitochondrion matrix. Functionally, promotes sorting of SMDT1/EMRE in mitochondria by ensuring its maturation. Interacts with the transit peptide region of SMDT1/EMRE precursor protein in the mitochondrial matrix, leading to protect it against protein degradation by YME1L1, thereby ensuring SMDT1/EMRE maturation by the mitochondrial processing peptidase (PMPCA and PMPCB). The chain is m-AAA protease-interacting protein 1, mitochondrial from Homo sapiens (Human).